A 156-amino-acid chain; its full sequence is MSRKNRAPKREVLPDPLYNSKLVTRLINRIMLDGKRGTASSIVYDAFSEIKEATGNDALEVFETAMDNIMPVLEVRARRVGGSNYQVPVEVRPERRTTLGLRWLVTASRARGEHTMKDRLAKEIMDAANNTGASVKKREDTHKMAEANRAFAHFRW.

It belongs to the universal ribosomal protein uS7 family. In terms of assembly, part of the 30S ribosomal subunit. Contacts proteins S9 and S11.

One of the primary rRNA binding proteins, it binds directly to 16S rRNA where it nucleates assembly of the head domain of the 30S subunit. Is located at the subunit interface close to the decoding center, probably blocks exit of the E-site tRNA. In Streptococcus equi subsp. equi (strain 4047), this protein is Small ribosomal subunit protein uS7.